The following is a 507-amino-acid chain: uncharacterized protein (507 aa).

The next 12 helical transmembrane spans lie at 11–31 (ILCF…IFPI), 97–117 (AWIA…YGHL), 125–145 (PVSF…GFAP), 149–169 (VFAV…IVFY), 187–207 (FFNW…CGYW), 209–229 (SAAI…LWLP), 283–303 (LFSS…WFST), 326–346 (FVQA…DLFI), 354–374 (LHQV…ALMI), 388–408 (LAII…WDAC), 423–443 (IGIG…PQMA), and 452–472 (IPYI…CFFL).

Belongs to the major facilitator superfamily.

The protein resides in the membrane. This is an uncharacterized protein from Caenorhabditis elegans.